Consider the following 506-residue polypeptide: D-alanine--D-alanyl carrier protein ligase (506 aa).

152–153 (TS) is an ATP binding site. Asp-197 serves as a coordination point for D-alanine. An ATP-binding site is contributed by 292–297 (NTYGPT). Residue Val-301 coordinates D-alanine. ATP contacts are provided by residues Asp-383, 395-398 (YRGR), and Lys-494. Lys-494 contributes to the D-alanine binding site.

This sequence belongs to the ATP-dependent AMP-binding enzyme family. DltA subfamily.

Its subcellular location is the cytoplasm. The enzyme catalyses holo-[D-alanyl-carrier protein] + D-alanine + ATP = D-alanyl-[D-alanyl-carrier protein] + AMP + diphosphate. It participates in cell wall biogenesis; lipoteichoic acid biosynthesis. Catalyzes the first step in the D-alanylation of lipoteichoic acid (LTA), the activation of D-alanine and its transfer onto the D-alanyl carrier protein (Dcp) DltC. In an ATP-dependent two-step reaction, forms a high energy D-alanyl-AMP intermediate, followed by transfer of the D-alanyl residue as a thiol ester to the phosphopantheinyl prosthetic group of the Dcp. D-alanylation of LTA plays an important role in modulating the properties of the cell wall in Gram-positive bacteria, influencing the net charge of the cell wall. In Lacticaseibacillus rhamnosus (Lactobacillus rhamnosus), this protein is D-alanine--D-alanyl carrier protein ligase.